The primary structure comprises 337 residues: Glyceraldehyde-3-phosphate dehydrogenase (337 aa).

NAD(+) contacts are provided by residues 17–18, aspartate 39, lysine 83, and serine 125; that span reads RI. Residues 156–158, threonine 187, arginine 202, 215–216, and arginine 238 contribute to the D-glyceraldehyde 3-phosphate site; these read SCT and TG. Cysteine 157 functions as the Nucleophile in the catalytic mechanism. Asparagine 319 contacts NAD(+).

The protein belongs to the glyceraldehyde-3-phosphate dehydrogenase family. As to quaternary structure, homotetramer.

Its subcellular location is the cytoplasm. The catalysed reaction is D-glyceraldehyde 3-phosphate + phosphate + NAD(+) = (2R)-3-phospho-glyceroyl phosphate + NADH + H(+). Its pathway is carbohydrate degradation; glycolysis; pyruvate from D-glyceraldehyde 3-phosphate: step 1/5. In terms of biological role, catalyzes the oxidative phosphorylation of glyceraldehyde 3-phosphate (G3P) to 1,3-bisphosphoglycerate (BPG) using the cofactor NAD. The first reaction step involves the formation of a hemiacetal intermediate between G3P and a cysteine residue, and this hemiacetal intermediate is then oxidized to a thioester, with concomitant reduction of NAD to NADH. The reduced NADH is then exchanged with the second NAD, and the thioester is attacked by a nucleophilic inorganic phosphate to produce BPG. This is Glyceraldehyde-3-phosphate dehydrogenase (gapA) from Mycoplasma pneumoniae (strain ATCC 29342 / M129 / Subtype 1) (Mycoplasmoides pneumoniae).